The primary structure comprises 61 residues: MGMRMMFTVFLLVVLATTVVSFMSGRASHGRNAAASDLIALTIKGCCSVPPCIANHPELCG.

The first 21 residues, 1–21 (MGMRMMFTVFLLVVLATTVVS), serve as a signal peptide directing secretion. The propeptide occupies 22 to 44 (FMSGRASHGRNAAASDLIALTIK). A Cysteine amide modification is found at Cys-60.

It belongs to the conotoxin A superfamily. Post-translationally, is not hydroxylated. Contains 2 disulfide bonds. As to expression, expressed by the venom duct.

The protein localises to the secreted. Its function is as follows. Alpha-conotoxins act on postsynaptic membranes, they bind to the nicotinic acetylcholine receptors (nAChR) and thus inhibit them. This chain is Alpha-conotoxine-like Am1.3, found in Conus amadis (Amadis cone).